The sequence spans 1222 residues: Chitin synthase 4 (1222 aa).

Residues 1 to 108 (MSLPERPGGI…NRIDKDHPNY (108 aa)) form a disordered region. Positions 51 to 68 (LSANSFAETIPSPNNSFV) are enriched in polar residues. N-linked (GlcNAc...) asparagine glycosylation occurs at Asn64. Over residues 94–107 (IRPERNRIDKDHPN) the composition is skewed to basic and acidic residues. The N-linked (GlcNAc...) asparagine glycan is linked to Asn116. The disordered stretch occupies residues 136–199 (TTDVSGSRSQ…KSTKKRSTPQ (64 aa)). Residues 137–154 (TDVSGSRSQTLDGVSDTS) show a composition bias toward polar residues. Residues 176 to 196 (SAKRVSRHKSGKITKSTKKRS) show a composition bias toward basic residues. A run of 2 helical transmembrane segments spans residues 204–224 (PPSF…DFML) and 242–262 (MGLI…TFGF). N-linked (GlcNAc...) asparagine glycans are attached at residues Asn378 and Asn418. Residues 509–529 (YVFLALILSVVGSRFVLALIF) form a helical membrane-spanning segment. A disordered region spans residues 595–662 (RFSTVYGPDR…PPSDGPGPAG (68 aa)). The segment covering 608–643 (NKRVPTTMASSGGSGSQLLHPNSMYRQGNDSRSSFL) has biased composition (polar residues). Asn636 and Asn1031 each carry an N-linked (GlcNAc...) asparagine glycan. 3 consecutive transmembrane segments (helical) span residues 1056–1076 (FIVF…AFTF), 1090–1110 (VIPL…IVIT), and 1116–1136 (YLVW…VLPV). The tract at residues 1201–1222 (GGGNSWSMPPGHQYHDDYYSDA) is disordered. Residues 1213–1222 (QYHDDYYSDA) show a composition bias toward basic and acidic residues.

The protein belongs to the chitin synthase family. Class IV subfamily.

The protein resides in the cell membrane. The enzyme catalyses [(1-&gt;4)-N-acetyl-beta-D-glucosaminyl](n) + UDP-N-acetyl-alpha-D-glucosamine = [(1-&gt;4)-N-acetyl-beta-D-glucosaminyl](n+1) + UDP + H(+). In terms of biological role, polymerizes chitin, a structural polymer of the cell wall and septum, by transferring the sugar moiety of UDP-GlcNAc to the non-reducing end of the growing chitin polymer. Plays a role in cell wall integrity and is involved in tolerance to hyperosmotic conditions. Required to successfully penetrate the host plants and thus plays a key role in pathogenicity. The polypeptide is Chitin synthase 4 (Verticillium dahliae (strain VdLs.17 / ATCC MYA-4575 / FGSC 10137) (Verticillium wilt)).